The primary structure comprises 177 residues: Peptide methionine sulfoxide reductase MsrA (177 aa).

Residue cysteine 15 is part of the active site.

The protein belongs to the MsrA Met sulfoxide reductase family.

It carries out the reaction L-methionyl-[protein] + [thioredoxin]-disulfide + H2O = L-methionyl-(S)-S-oxide-[protein] + [thioredoxin]-dithiol. It catalyses the reaction [thioredoxin]-disulfide + L-methionine + H2O = L-methionine (S)-S-oxide + [thioredoxin]-dithiol. In terms of biological role, has an important function as a repair enzyme for proteins that have been inactivated by oxidation. Catalyzes the reversible oxidation-reduction of methionine sulfoxide in proteins to methionine. This is Peptide methionine sulfoxide reductase MsrA from Listeria monocytogenes serotype 4a (strain HCC23).